The sequence spans 234 residues: 1-(5-phosphoribosyl)-5-[(5-phosphoribosylamino)methylideneamino] imidazole-4-carboxamide isomerase (234 aa).

Catalysis depends on Asp-9, which acts as the Proton acceptor. Asp-131 functions as the Proton donor in the catalytic mechanism.

Belongs to the HisA/HisF family.

The protein localises to the cytoplasm. The catalysed reaction is 1-(5-phospho-beta-D-ribosyl)-5-[(5-phospho-beta-D-ribosylamino)methylideneamino]imidazole-4-carboxamide = 5-[(5-phospho-1-deoxy-D-ribulos-1-ylimino)methylamino]-1-(5-phospho-beta-D-ribosyl)imidazole-4-carboxamide. It participates in amino-acid biosynthesis; L-histidine biosynthesis; L-histidine from 5-phospho-alpha-D-ribose 1-diphosphate: step 4/9. The chain is 1-(5-phosphoribosyl)-5-[(5-phosphoribosylamino)methylideneamino] imidazole-4-carboxamide isomerase from Staphylococcus epidermidis (strain ATCC 35984 / DSM 28319 / BCRC 17069 / CCUG 31568 / BM 3577 / RP62A).